Consider the following 569-residue polypeptide: Protein AF-9 (569 aa).

A YEATS domain is found at 1–138; it reads MASSCAVQVK…EDFRRKLLKA (138 aa). Residues 138–476 form a disordered region; it reads AGGDPNRSIH…PPPPLLKTNN (339 aa). Over residues 149 to 190 the composition is skewed to low complexity; the sequence is SSSSSSSSSSSSSSSSSSSSSSSSSSSSSSSSSSSSSSSSSS. Residues 202–265 show a composition bias toward basic and acidic residues; the sequence is EHKEKPSKDS…PKPMSKEPKA (64 aa). 2 positions are modified to phosphoserine: Ser289 and Ser295. Positions 296-301 match the Nuclear localization signal motif; sequence AKKRKK. Low complexity predominate over residues 304 to 314; it reads SEALFKSFSSA. The span at 323–350 shows a compositional bias: basic and acidic residues; that stretch reads ADKKQIKDKSHVKMGKVKIESETSEKKK. A Glycyl lysine isopeptide (Lys-Gly) (interchain with G-Cter in SUMO2) cross-link involves residue Lys340. Residues 358 to 369 show a composition bias toward acidic residues; that stretch reads DIVDPNDSDVEE. The span at 372–396 shows a compositional bias: low complexity; the sequence is SSKSDSEQPSPASSSSSSSSSFTPS. Phosphoserine is present on residues Ser413 and Ser420. Residues 415 to 430 are compositionally biased toward acidic residues; sequence DNEEESDEAEDNDNDS. Residues 446 to 462 are compositionally biased toward low complexity; it reads VSLSDGSDSESSSASSP. Residue Ser484 is modified to Phosphoserine.

As to quaternary structure, component of the super elongation complex (SEC), at least composed of EAF1, EAF2, CDK9, MLLT3/AF9, AFF (AFF1 or AFF4), the P-TEFb complex and ELL (ELL, ELL2 or ELL3). Interacts with BCOR. Interacts with CBX8. Interacts with ALKBH4. As to expression, ubiquitously expressed. Strong expression in the spleen.

Its subcellular location is the nucleus. The protein resides in the chromosome. Chromatin reader component of the super elongation complex (SEC), a complex required to increase the catalytic rate of RNA polymerase II transcription by suppressing transient pausing by the polymerase at multiple sites along the DNA. Specifically recognizes and binds acylated histone H3, with a preference for histone H3 that is crotonylated. Crotonylation marks active promoters and enhancers and confers resistance to transcriptional repressors. Recognizes and binds histone H3 crotonylated at 'Lys-9' (H3K9cr), and with slightly lower affinity histone H3 crotonylated at 'Lys-18' (H3K18cr). Also recognizes and binds histone H3 acetylated and butyrylated at 'Lys-9' (H3K9ac and H3K9bu, respectively), but with lower affinity than crotonylated histone H3. In the SEC complex, MLLT3 is required to recruit the complex to crotonylated histones. Recruitment of the SEC complex to crotonylated histones promotes recruitment of DOT1L on active chromatin to deposit histone H3 'Lys-79' methylation (H3K79me). Plays a key role in hematopoietic stem cell (HSC) maintenance by preserving, rather than conferring, HSC stemness. Acts by binding to the transcription start site of active genes in HSCs and sustaining level of H3K79me2, probably by recruiting DOT1L. The chain is Protein AF-9 (Mllt3) from Mus musculus (Mouse).